Here is a 116-residue protein sequence, read N- to C-terminus: Small ribosomal subunit protein eS24 (116 aa).

Residues 81 to 116 (IEPEHMVERHKKVLEELESESEESEESESEESEEEE) are disordered. Residues 96–116 (ELESESEESEESESEESEEEE) show a composition bias toward acidic residues.

The protein belongs to the eukaryotic ribosomal protein eS24 family.

This chain is Small ribosomal subunit protein eS24, found in Methanopyrus kandleri (strain AV19 / DSM 6324 / JCM 9639 / NBRC 100938).